A 488-amino-acid chain; its full sequence is Protein nucleotidyltransferase YdiU (488 aa).

Residues Gly-91, Gly-93, Arg-94, Lys-114, Asp-126, Gly-127, Arg-177, and Arg-184 each coordinate ATP. The active-site Proton acceptor is the Asp-253. 2 residues coordinate Mg(2+): Asn-254 and Asp-263. Position 263 (Asp-263) interacts with ATP.

The protein belongs to the SELO family. Mg(2+) is required as a cofactor. The cofactor is Mn(2+).

The catalysed reaction is L-seryl-[protein] + ATP = 3-O-(5'-adenylyl)-L-seryl-[protein] + diphosphate. The enzyme catalyses L-threonyl-[protein] + ATP = 3-O-(5'-adenylyl)-L-threonyl-[protein] + diphosphate. It catalyses the reaction L-tyrosyl-[protein] + ATP = O-(5'-adenylyl)-L-tyrosyl-[protein] + diphosphate. It carries out the reaction L-histidyl-[protein] + UTP = N(tele)-(5'-uridylyl)-L-histidyl-[protein] + diphosphate. The catalysed reaction is L-seryl-[protein] + UTP = O-(5'-uridylyl)-L-seryl-[protein] + diphosphate. The enzyme catalyses L-tyrosyl-[protein] + UTP = O-(5'-uridylyl)-L-tyrosyl-[protein] + diphosphate. Functionally, nucleotidyltransferase involved in the post-translational modification of proteins. It can catalyze the addition of adenosine monophosphate (AMP) or uridine monophosphate (UMP) to a protein, resulting in modifications known as AMPylation and UMPylation. The chain is Protein nucleotidyltransferase YdiU from Bacillus cereus (strain ZK / E33L).